Reading from the N-terminus, the 219-residue chain is MKVVVIDSGTGNLASARRGLEIAAGRAGLDAKVIASADPLDVRNADRIVLPGQGAFADCARGIAAIEGMRGAIEEGVAAGKPFLGICVGMQLMAERGLEHEGAPGFGWIKGEIAPISCPGLRLPQMGWNGLDFTSTGCVHPLLNGLQADDHAYFVHGYALRDGDQAQILATTEYGGPVVAMVASGNRAGTQFHVEKSQEVGLRILQNFMVWTPEGTSGS.

The Glutamine amidotransferase type-1 domain maps to 2–218 (KVVVIDSGTG…MVWTPEGTSG (217 aa)). Catalysis depends on Cys-87, which acts as the Nucleophile. Catalysis depends on residues His-193 and Glu-195.

As to quaternary structure, heterodimer of HisH and HisF.

It is found in the cytoplasm. The enzyme catalyses 5-[(5-phospho-1-deoxy-D-ribulos-1-ylimino)methylamino]-1-(5-phospho-beta-D-ribosyl)imidazole-4-carboxamide + L-glutamine = D-erythro-1-(imidazol-4-yl)glycerol 3-phosphate + 5-amino-1-(5-phospho-beta-D-ribosyl)imidazole-4-carboxamide + L-glutamate + H(+). It carries out the reaction L-glutamine + H2O = L-glutamate + NH4(+). It functions in the pathway amino-acid biosynthesis; L-histidine biosynthesis; L-histidine from 5-phospho-alpha-D-ribose 1-diphosphate: step 5/9. Functionally, IGPS catalyzes the conversion of PRFAR and glutamine to IGP, AICAR and glutamate. The HisH subunit catalyzes the hydrolysis of glutamine to glutamate and ammonia as part of the synthesis of IGP and AICAR. The resulting ammonia molecule is channeled to the active site of HisF. In Granulibacter bethesdensis (strain ATCC BAA-1260 / CGDNIH1), this protein is Imidazole glycerol phosphate synthase subunit HisH.